The primary structure comprises 254 residues: Probable triosephosphate isomerase 2 (254 aa).

Residue 9 to 11 (NMK) participates in substrate binding. H96 functions as the Electrophile in the catalytic mechanism. E168 serves as the catalytic Proton acceptor. The substrate site is built by G174 and S212.

Belongs to the triosephosphate isomerase family. As to quaternary structure, homodimer.

The protein localises to the cytoplasm. It carries out the reaction D-glyceraldehyde 3-phosphate = dihydroxyacetone phosphate. It participates in carbohydrate biosynthesis; gluconeogenesis. The protein operates within carbohydrate degradation; glycolysis; D-glyceraldehyde 3-phosphate from glycerone phosphate: step 1/1. Involved in the gluconeogenesis. Catalyzes stereospecifically the conversion of dihydroxyacetone phosphate (DHAP) to D-glyceraldehyde-3-phosphate (G3P). The chain is Probable triosephosphate isomerase 2 from Listeria monocytogenes serotype 4b (strain F2365).